The sequence spans 208 residues: Elongation factor Ts, chloroplastic (208 aa).

It belongs to the EF-Ts family.

It is found in the plastid. The protein localises to the chloroplast. Associates with the EF-Tu.GDP complex and induces the exchange of GDP to GTP. It remains bound to the aminoacyl-tRNA.EF-Tu.GTP complex up to the GTP hydrolysis stage on the ribosome. This is Elongation factor Ts, chloroplastic (tsf) from Cyanidium caldarium (Red alga).